Consider the following 506-residue polypeptide: Cobyric acid synthase (506 aa).

In terms of domain architecture, GATase cobBQ-type spans 251–448; it reads DITIAIVQLP…LHGLFDSDAF (198 aa). The active-site Nucleophile is Cys332. His440 is an active-site residue.

The protein belongs to the CobB/CobQ family. CobQ subfamily.

It participates in cofactor biosynthesis; adenosylcobalamin biosynthesis. Catalyzes amidations at positions B, D, E, and G on adenosylcobyrinic A,C-diamide. NH(2) groups are provided by glutamine, and one molecule of ATP is hydrogenolyzed for each amidation. The chain is Cobyric acid synthase from Salmonella agona (strain SL483).